The following is a 328-amino-acid chain: Protease HtpX homolog (328 aa).

Transmembrane regions (helical) follow at residues 6 to 26 (TAMLLAFMTALFMGVGYLIGG) and 28 to 48 (SGMMIAFVAAAGMNFFSYWNS). H130 is a binding site for Zn(2+). E131 is an active-site residue. Residue H134 participates in Zn(2+) binding. The next 2 helical transmembrane spans lie at 145–165 (ITATLAGAISMLGNFAFFFGG) and 172–192 (PLGAIGVLAAMIVAPLAAMLV). E201 contributes to the Zn(2+) binding site. The interval 279–328 (QYGGGTGPSVGTPTRSGSTGPAMTANPERKSRSVPNTGRGGSQPPKGPWS) is disordered. The segment covering 287 to 299 (SVGTPTRSGSTGP) has biased composition (low complexity).

Belongs to the peptidase M48B family. The cofactor is Zn(2+).

Its subcellular location is the cell inner membrane. The chain is Protease HtpX homolog from Rhizobium rhizogenes (strain K84 / ATCC BAA-868) (Agrobacterium radiobacter).